Reading from the N-terminus, the 234-residue chain is LexA repressor (234 aa).

Residues 26-46 (FDEMKDALDLRSKSGIHRLIT) constitute a DNA-binding region (H-T-H motif). The segment at 80-107 (RGFTPSVIEGNLGKVRPPSPQHAEDDSD) is disordered. Active-site for autocatalytic cleavage activity residues include Ser155 and Lys193.

Belongs to the peptidase S24 family. As to quaternary structure, homodimer.

It catalyses the reaction Hydrolysis of Ala-|-Gly bond in repressor LexA.. In terms of biological role, represses a number of genes involved in the response to DNA damage (SOS response), including recA and lexA. In the presence of single-stranded DNA, RecA interacts with LexA causing an autocatalytic cleavage which disrupts the DNA-binding part of LexA, leading to derepression of the SOS regulon and eventually DNA repair. This Rhodopseudomonas palustris (strain HaA2) protein is LexA repressor.